We begin with the raw amino-acid sequence, 267 residues long: Energy-coupling factor transporter transmembrane protein EcfT (267 aa).

5 helical membrane-spanning segments follow: residues 30-50 (FWYVVIIFFAKGPLTYLLLVA), 67-87 (WAGLKPLLWVIGLTIAIQVLF), 110-130 (ALVILARFILIVLASTVLTAT), 152-172 (VPVNQIAMMISIALRFIPTIM), and 247-267 (SIALAVVVIVSVLFFVARILL).

It belongs to the energy-coupling factor EcfT family. In terms of assembly, forms a stable energy-coupling factor (ECF) transporter complex composed of 2 membrane-embedded substrate-binding proteins (S component), 2 ATP-binding proteins (A component) and 2 transmembrane proteins (T component). May be able to interact with more than 1 S component at a time.

It localises to the cell membrane. Functionally, transmembrane (T) component of an energy-coupling factor (ECF) ABC-transporter complex. Unlike classic ABC transporters this ECF transporter provides the energy necessary to transport a number of different substrates. This Limosilactobacillus fermentum (strain CECT 5716 / Lc40) (Lactobacillus fermentum) protein is Energy-coupling factor transporter transmembrane protein EcfT.